The primary structure comprises 1506 residues: Phosphatidylinositol 3-kinase C2 domain-containing subunit gamma (1506 aa).

The segment at 1-34 (MAYSWQTEPNRTEPQEDGSDTQQFHHTNQHLSSR) is disordered. The span at 20–34 (DTQQFHHTNQHLSSR) shows a compositional bias: polar residues. Residues 285–371 (DTKFRVKISI…IQLHLQKNRD (87 aa)) enclose the PI3K-RBD domain. The C2 PI3K-type domain occupies 541-689 (LQSHLSFTVC…SPLTLQIDFP (149 aa)). The PIK helical domain occupies 704 to 880 (RTDHEEPPRE…QELLAALQFC (177 aa)). A PI3K/PI4K catalytic domain is found at 949–1227 (DRDACSYFTS…KIKESLECFP (279 aa)). The interval 955–961 (YFTSNAS) is G-loop. Residues 1091-1099 (GVCDRHNDN) are catalytic loop. Residues 1110–1136 (HIDFGKFLGHAQTFGGIKRDRAPFIFT) form an activation loop region. In terms of domain architecture, PX spans 1260 to 1372 (LNKTRTIQRV…SFFLSEHIQP (113 aa)). Positions 1381–1506 (DPGENSLDKS…KWYPLGNSII (126 aa)) constitute a C2 domain.

The protein belongs to the PI3/PI4-kinase family. As to expression, expressed predominantly in liver. Also found in kidney, lung and lymphoid tissue. Down-regulated in BeF3 cells expressing the BCR-ABL oncogene p185.

The protein localises to the membrane. The enzyme catalyses a 1,2-diacyl-sn-glycero-3-phospho-(1D-myo-inositol 4-phosphate) + ATP = a 1,2-diacyl-sn-glycero-3-phospho-(1D-myo-inositol-3,4-bisphosphate) + ADP + H(+). It carries out the reaction a 1,2-diacyl-sn-glycero-3-phospho-(1D-myo-inositol) + ATP = a 1,2-diacyl-sn-glycero-3-phospho-(1D-myo-inositol-3-phosphate) + ADP + H(+). Generates phosphatidylinositol 3-phosphate (PtdIns3P) and phosphatidylinositol 3,4-bisphosphate (PtdIns(3,4)P2) that act as second messengers. May play a role in SDF1A-stimulated chemotaxis. The sequence is that of Phosphatidylinositol 3-kinase C2 domain-containing subunit gamma (Pik3c2g) from Mus musculus (Mouse).